Reading from the N-terminus, the 371-residue chain is Bifunctional chorismate mutase/prephenate dehydratase (371 aa).

Positions 1 to 92 (MTLKNALLAF…DSVLTQKKWI (92 aa)) constitute a Chorismate mutase domain. The substrate site is built by arginine 11, arginine 28, lysine 39, aspartate 48, glutamate 52, serine 84, and glutamine 88. Positions 104–284 (KISFLGSFGS…NITQFIILAQ (181 aa)) constitute a Prephenate dehydratase domain. The segment at 285 to 371 (KKTYITNKKT…IKCIKILGCF (87 aa)) is regulatory.

The protein resides in the cytoplasm. The catalysed reaction is chorismate = prephenate. It carries out the reaction prephenate + H(+) = 3-phenylpyruvate + CO2 + H2O. The protein operates within amino-acid biosynthesis; L-phenylalanine biosynthesis; phenylpyruvate from prephenate: step 1/1. It functions in the pathway metabolic intermediate biosynthesis; prephenate biosynthesis; prephenate from chorismate: step 1/1. Catalyzes the Claisen rearrangement of chorismate to prephenate and the decarboxylation/dehydration of prephenate to phenylpyruvate. The sequence is that of Bifunctional chorismate mutase/prephenate dehydratase (pheA) from Buchnera aphidicola subsp. Baizongia pistaciae (strain Bp).